The following is a 137-amino-acid chain: Large-conductance mechanosensitive channel (137 aa).

2 helical membrane passes run 15–35 and 81–101; these read VDLA…TSLV and GKFI…FFVI.

The protein belongs to the MscL family. In terms of assembly, homopentamer.

The protein resides in the cell inner membrane. Functionally, channel that opens in response to stretch forces in the membrane lipid bilayer. May participate in the regulation of osmotic pressure changes within the cell. This chain is Large-conductance mechanosensitive channel, found in Hyphomonas neptunium (strain ATCC 15444).